A 252-amino-acid chain; its full sequence is 3-dehydroquinate dehydratase (252 aa).

3-dehydroquinate contacts are provided by residues Ser21, 46–48 (EWR), and Arg82. His143 serves as the catalytic Proton donor/acceptor. Lys170 serves as the catalytic Schiff-base intermediate with substrate. Residues Arg213, Ser232, and Gln236 each contribute to the 3-dehydroquinate site.

The protein belongs to the type-I 3-dehydroquinase family. Homodimer.

It catalyses the reaction 3-dehydroquinate = 3-dehydroshikimate + H2O. The protein operates within metabolic intermediate biosynthesis; chorismate biosynthesis; chorismate from D-erythrose 4-phosphate and phosphoenolpyruvate: step 3/7. Functionally, involved in the third step of the chorismate pathway, which leads to the biosynthesis of aromatic amino acids. Catalyzes the cis-dehydration of 3-dehydroquinate (DHQ) and introduces the first double bond of the aromatic ring to yield 3-dehydroshikimate. This Salmonella choleraesuis (strain SC-B67) protein is 3-dehydroquinate dehydratase.